The chain runs to 1020 residues: Retinoblastoma-related protein (1020 aa).

Composition is skewed to polar residues over residues 382-391 and 398-409; these read SPTKTITSPL and ASHTNGILGSTN. Positions 382-409 are disordered; the sequence is SPTKTITSPLSPHRSPASHTNGILGSTN. The domain A stretch occupies residues 415 to 616; it reads TPVSTAMTTA…EKGSSMYNSL (202 aa). Residues 415-869 form a pocket region; sequence TPVSTAMTTA…NEIFIPAAKP (455 aa). The spacer stretch occupies residues 617-737; sequence TVARPSLSAE…PGGGGETCAE (121 aa). Residues 738 to 869 form a domain B region; that stretch reads TGINIFFSKI…NEIFIPAAKP (132 aa).

It belongs to the retinoblastoma protein (RB) family.

It localises to the nucleus. Functionally, regulator of biological processes that recruits a histone deacetylase to control gene transcription. May play a role in the entry into mitosis, negatively regulating the cell proliferation. Formation of stable complexes with geminiviridae replication-associated proteins may create a cellular environment which favors viral DNA replication. This Ricinus communis (Castor bean) protein is Retinoblastoma-related protein (RBR).